A 277-amino-acid chain; its full sequence is 4-hydroxy-tetrahydrodipicolinate reductase (277 aa).

Residues 11–16 (GALGRM) and 110–112 (GTT) contribute to the NAD(+) site. The Proton donor/acceptor role is filled by histidine 166. Histidine 167 contacts (S)-2,3,4,5-tetrahydrodipicolinate. The Proton donor role is filled by lysine 170. (S)-2,3,4,5-tetrahydrodipicolinate is bound at residue 176–177 (GT).

This sequence belongs to the DapB family.

It localises to the cytoplasm. It carries out the reaction (S)-2,3,4,5-tetrahydrodipicolinate + NAD(+) + H2O = (2S,4S)-4-hydroxy-2,3,4,5-tetrahydrodipicolinate + NADH + H(+). The catalysed reaction is (S)-2,3,4,5-tetrahydrodipicolinate + NADP(+) + H2O = (2S,4S)-4-hydroxy-2,3,4,5-tetrahydrodipicolinate + NADPH + H(+). Its pathway is amino-acid biosynthesis; L-lysine biosynthesis via DAP pathway; (S)-tetrahydrodipicolinate from L-aspartate: step 4/4. Its function is as follows. Catalyzes the conversion of 4-hydroxy-tetrahydrodipicolinate (HTPA) to tetrahydrodipicolinate. The chain is 4-hydroxy-tetrahydrodipicolinate reductase from Synechococcus sp. (strain CC9605).